Here is an 806-residue protein sequence, read N- to C-terminus: MDESKKARSGDKKKEKAVAGILPHSNKPARVPLIAVPSHPVFPGMFIPIVLISDSDMKAIDYAMKGNGIIALFVLNDKFLEKNNNNAQQKLIIDYSKDIYSVGVTGKIIKKINLPDGGYNIFVSTFDRIKFVKVVLNDKFPIIEIDYLKQIPVRKDDIQSKAVYGSILLRTKEIFAHRKMPEVQLNMVNIEDKGKLCDIVASTISSSKNDHQIVLETLNVKDRLKKVLELIYEELNLIEIQNKIAKGIQERLEKQQKEFFLKEQLKAIKAELGIGDKKSSDLEKLKTKLKALELKGEPLEVVEKELEKFSLLETSSAEYIVVRNYLELITELPWRDFKINFDKLDLQKSKKILDKTHYGMNEVKDRIIEYISVLKLRKTQKGAIILLVGPPGVGKTSIGAAIAKVLRTKFFRFSVGGMRDESEIKGHRRTYVGALPGKIIQGLRITKTNSPVFLIDEVDKISASSYGDPFSVLLEVLDPEQNVRFRDHYLDLPFDISNVFFILTANSVETIPRPLLNRMEIIEISGYIDNEKIEIARKYLIPKVLSENGVDKDSLKFQSSSLVQIAQEYARDNGVRNFEKYLNKIVRKVARKLIENTEVKSYQISNDNLEEYVGVPVFRKESMPNAMYSGMVMGLAWTNYGGSTLMIETVKTESKVGGIKLTGRLGDVMKESANIAYTYVNSIKGDLSISKSFFEKNIIHLHIPEGATPKDGPSAGITIASAFISLALNKVVRPHLAMTGELSLTGNVMMIGGLKEKIIAAKRSGVEHIIVPKANRVDLEEIPTNIKSGINFYLVDNMREVIKLLF.

A Lon N-terminal domain is found at 31–235 (VPLIAVPSHP…KVLELIYEEL (205 aa)). 389 to 396 (GPPGVGKT) lines the ATP pocket. A Lon proteolytic domain is found at 626-806 (AMYSGMVMGL…NMREVIKLLF (181 aa)). Active-site residues include serine 714 and lysine 757.

This sequence belongs to the peptidase S16 family. Homohexamer. Organized in a ring with a central cavity.

It localises to the cytoplasm. The catalysed reaction is Hydrolysis of proteins in presence of ATP.. ATP-dependent serine protease that mediates the selective degradation of mutant and abnormal proteins as well as certain short-lived regulatory proteins. Required for cellular homeostasis and for survival from DNA damage and developmental changes induced by stress. Degrades polypeptides processively to yield small peptide fragments that are 5 to 10 amino acids long. Binds to DNA in a double-stranded, site-specific manner. The polypeptide is Lon protease 1 (Borreliella burgdorferi (strain ATCC 35210 / DSM 4680 / CIP 102532 / B31) (Borrelia burgdorferi)).